A 554-amino-acid chain; its full sequence is Trichloroethene reductive dehalogenase (554 aa).

A signal peptide (tat-type signal) is located at residues 1–42 (MSEKYHSTVTRRDFMKRLGLAGAGAGALGAAVLAENNLPHEF). 4Fe-4S ferredoxin-type domains lie at 425–457 (PTKP…HEGP) and 471–500 (EGWH…NNSW). 8 residues coordinate [4Fe-4S] cluster: Cys437, Cys440, Cys443, Cys447, Cys480, Cys483, Cys486, and Cys490.

The protein belongs to the PceA family. [4Fe-4S] cluster serves as cofactor. Requires corrinoid as cofactor. Predicted to be exported by the Tat system. The position of the signal peptide cleavage has been experimentally proven.

The protein resides in the cell membrane. The catalysed reaction is trichloroethene + AH2 = (Z)-1,2-dichloroethene + chloride + A + H(+). The enzyme catalyses (Z)-1,2-dichloroethene + AH2 = chloroethene + chloride + A + H(+). It catalyses the reaction 1,1-dichloroethene + AH2 = chloroethene + chloride + A + H(+). Loses 93% of its activity upon incubation with 1-iodopropane and titanium(III) citrate in the dark. Subsequent exposure to light restores 80% of the original activity. Completely inhibited by 2 mM sodium sulfite or sodium dithionite, and by 1 mM cuprous chloride. Catalyzes the reductive dechlorination of trichloroethene (TCE) to cis-1,2-dichloroethene (DCE) and of cis-1,2-dichloroethene to chloroethene. The substrate specificity is broad, and the enzyme can dehalogenate various substrates, including 1,1-dichloroethene (1,1-DCE), 1,2-dichloroethane and 1,2-dibromoethane. A variety of other haloalkanes and haloalkenes containing three to five carbon atoms are dehalogenated at lower rates. Trans-1,2-dichloroethene (trans-DCE) and chloroethene are degraded at rates which are approximately 2 orders of magnitude lower. Titanium(III) citrate and methyl viologen can be used as reductants. The polypeptide is Trichloroethene reductive dehalogenase (Dehalococcoides mccartyi (strain ATCC BAA-2266 / KCTC 15142 / 195) (Dehalococcoides ethenogenes (strain 195))).